The primary structure comprises 1360 residues: DNA-directed RNA polymerase subunit beta (1360 aa).

The protein belongs to the RNA polymerase beta chain family. As to quaternary structure, the RNAP catalytic core consists of 2 alpha, 1 beta, 1 beta' and 1 omega subunit. When a sigma factor is associated with the core the holoenzyme is formed, which can initiate transcription.

It carries out the reaction RNA(n) + a ribonucleoside 5'-triphosphate = RNA(n+1) + diphosphate. Functionally, DNA-dependent RNA polymerase catalyzes the transcription of DNA into RNA using the four ribonucleoside triphosphates as substrates. In Desulfotalea psychrophila (strain LSv54 / DSM 12343), this protein is DNA-directed RNA polymerase subunit beta.